The chain runs to 121 residues: Neuropeptide-like protein 7 (121 aa).

A signal peptide spans 1-22 (MYIKAALLIVVLFGVASQITSA).

In terms of biological role, may regulate lifespan in response to food availability and oxidative stress. This Caenorhabditis elegans protein is Neuropeptide-like protein 7.